Here is a 144-residue protein sequence, read N- to C-terminus: MAKKVEAYIKLQIPAGKANPSPPVGPALGQRGVNIMEFCKAFNAATQQMEQGLPIPVVITVYSDRSFTFITKTPPASVLLKKAAGIQSGSGTPNTKKVAKLNVSQLEEIAKVKKPDLTAADLAAAVRSIAGTARSMGIEVEGLE.

Belongs to the universal ribosomal protein uL11 family. Part of the ribosomal stalk of the 50S ribosomal subunit. Interacts with L10 and the large rRNA to form the base of the stalk. L10 forms an elongated spine to which L12 dimers bind in a sequential fashion forming a multimeric L10(L12)X complex. One or more lysine residues are methylated.

In terms of biological role, forms part of the ribosomal stalk which helps the ribosome interact with GTP-bound translation factors. This Legionella pneumophila (strain Paris) protein is Large ribosomal subunit protein uL11.